The following is an 823-amino-acid chain: Apoptosis-resistant E3 ubiquitin protein ligase 1 (823 aa).

A Filamin repeat occupies 52 to 158 (GNYLDPRSCK…VAYSPYYKIF (107 aa)). The disordered stretch occupies residues 315-345 (PPMHMTSSQRRPSTAVDEEDEDSPSECHTPE). An interaction with SOCS2 region spans residues 483–789 (SISDWSKNFE…THSTLPTAHT (307 aa)). In terms of domain architecture, HECT spans 483-823 (SISDWSKNFE…SEGCEGFGML (341 aa)). Residue Cys790 is the Glycyl thioester intermediate of the active site.

Interacts with SOCS2. Interacts (via HECT domain) with HTRA2, DIABLO/SMAC and SEPTIN4; in the cytoplasm following induction of apoptosis. Autoubiquitinated in vitro in the presence of E2 enzyme UBE2D1/UBCH5A.

The enzyme catalyses S-ubiquitinyl-[E2 ubiquitin-conjugating enzyme]-L-cysteine + [acceptor protein]-L-lysine = [E2 ubiquitin-conjugating enzyme]-L-cysteine + N(6)-ubiquitinyl-[acceptor protein]-L-lysine.. It functions in the pathway protein modification; protein ubiquitination. Its function is as follows. E3 ubiquitin-protein ligase that catalyzes 'Lys-11'- or 'Lys-33'-linked polyubiquitin chains, with some preference for 'Lys-33' linkages. E3 ubiquitin-protein ligases accept ubiquitin from an E2 ubiquitin-conjugating enzyme in the form of a thioester and then directly transfers the ubiquitin to targeted substrates. Ubiquitinates SEPTIN4, DIABLO/SMAC and HTRA2 in vitro. Modulates pulmonary inflammation by targeting SOCS2 for ubiquitination and subsequent degradation by the proteasome. The sequence is that of Apoptosis-resistant E3 ubiquitin protein ligase 1 from Homo sapiens (Human).